Consider the following 283-residue polypeptide: MKRRQKRKHLENEESQETAEKGGGIQRIHRDSPQPQSPLAQVQERGETPPRSQHVSLSFHSSYKTCVSSLCVNKEERGMKIYYMQVQMNKGVAVSWETEETLESLEKQPRMEEVTLSEVVRVGTPPSDVSTRNLLSDSEPSGEEKEHEERTESDSLPGSPTVEDTPRAKTPDWLVTMENGFRCMACCRVFTTMEALQEHVQFGIREGFSCHVFHLTMAQLTGNMESESTQDEQEEENGNEKEEEEKPEAKEEEGQPTEEDLGLRRSWSQCPGCVFHSPKDRNS.

2 disordered regions span residues 1 to 54 and 123 to 171; these read MKRR…RSQH and GTPP…AKTP. Positions 127 to 138 are enriched in polar residues; it reads SDVSTRNLLSDS. The span at 142–153 shows a compositional bias: basic and acidic residues; that stretch reads GEEKEHEERTES. Threonine 170 carries the phosphothreonine modification. A C2H2-type; degenerate zinc finger spans residues 181 to 205; sequence FRCMACCRVFTTMEALQEHVQFGIR. Residues 223–283 are disordered; that stretch reads NMESESTQDE…VFHSPKDRNS (61 aa). Acidic residues predominate over residues 228–246; the sequence is STQDEQEEENGNEKEEEEK. Serine 268 carries the phosphoserine modification.

It belongs to the FAM170 family.

It localises to the nucleus. Functionally, acts as a nuclear transcription factor that positively regulates the expression of heat shock genes. Binds to heat shock promoter elements (HSE). This is Protein FAM170A (FAM170A) from Macaca fascicularis (Crab-eating macaque).